Reading from the N-terminus, the 248-residue chain is tRNA uridine(34) hydroxylase (248 aa).

One can recognise a Rhodanese domain in the interval Arg-127 to Tyr-221. Cys-181 acts as the Cysteine persulfide intermediate in catalysis.

This sequence belongs to the TrhO family.

It carries out the reaction uridine(34) in tRNA + AH2 + O2 = 5-hydroxyuridine(34) in tRNA + A + H2O. Catalyzes oxygen-dependent 5-hydroxyuridine (ho5U) modification at position 34 in tRNAs. The sequence is that of tRNA uridine(34) hydroxylase from Xanthomonas euvesicatoria pv. vesicatoria (strain 85-10) (Xanthomonas campestris pv. vesicatoria).